Reading from the N-terminus, the 28-residue chain is uORF1 protein (28 aa).

Its subcellular location is the host cytoplasm. It is found in the host cytoskeleton. Its function is as follows. Plays a role in the reorganization of host microtubules and intermediate filaments to form a cytoskeletal cage that surrounds the viral factories, protecting the site of viral replication. May play a role in viral infection of human cortical neurons. The chain is uORF1 protein from Zika virus (isolate ZIKV/Human/French Polynesia/10087PF/2013) (ZIKV).